The chain runs to 273 residues: Flagellin FljO (273 aa).

It belongs to the bacterial flagellin family. In terms of assembly, in C.crescentus, the flagellar filament is composed of multiple flagellins of 29 kDa; 27 kDa and 25 kDa.

It is found in the secreted. It localises to the bacterial flagellum. Its function is as follows. Flagellin is the subunit protein which polymerizes to form the filaments of bacterial flagella. The polypeptide is Flagellin FljO (fljO) (Caulobacter vibrioides (strain ATCC 19089 / CIP 103742 / CB 15) (Caulobacter crescentus)).